The following is a 225-amino-acid chain: THAP domain-containing protein 1 A (225 aa).

A THAP-type zinc finger spans residues 5–57 (CSAYGCKNRYDKDKPISFHKFPLKRPLLCKKWEAAVRRAEFKPTKYSSICSDH). Positions 139–194 (VEDTVHQRRRIQQLEEQVDKLRKKLKIANQKCRRQERSLEKLEREVSEYREAKGSG) form a coiled coil.

This sequence belongs to the THAP1 family.

It is found in the nucleus. The protein localises to the nucleoplasm. Functionally, DNA-binding transcription regulator that regulates endothelial cell proliferation and G1/S cell-cycle progression. Specifically binds the 5'-[AT]NTNN[GT]GGCA[AGT]-3' core DNA sequence and acts by modulating expression of pRB-E2F cell-cycle target genes. The polypeptide is THAP domain-containing protein 1 A (thap1-a) (Xenopus laevis (African clawed frog)).